The chain runs to 581 residues: Myoneurin (581 aa).

The region spanning 24-89 (CDCTIVIGEF…IYTGTLNLDS (66 aa)) is the BTB domain. The tract at residues 167-193 (PKQGALAKKSSQTKKKKKAFNSQKTGQ) is disordered. Short sequence motifs (nuclear localization signal) lie at residues 174–190 (KKSS…NSQK) and 256–261 (KRKRGK). Serine 288 is modified (phosphoserine). C2H2-type zinc fingers lie at residues 301 to 323 (PMCN…MRIH), 329 to 351 (YVCH…VRTH), 357 to 380 (YKCE…RMHH), 386 to 408 (YKCD…ARKH), 414 to 436 (YVCD…VRRH), 442 to 464 (YVCD…SRKH), and 470 to 493 (FICE…TKVH).

This sequence belongs to the krueppel C2H2-type zinc-finger protein family.

It localises to the nucleus. In Bos taurus (Bovine), this protein is Myoneurin (MYNN).